Reading from the N-terminus, the 486-residue chain is Protein DETOXIFICATION 16 (486 aa).

12 helical membrane-spanning segments follow: residues 35–55 (GPLIAVSLLQFCLQVISVMFV), 68–88 (IATSFASVTGFSFLMGTASAL), 117–137 (LASIPLSIIWANTEHLLVFFG), 142–162 (IATLAGSYAKFMIPSIFAYGL), 179–199 (VVFCSGVTTSLHVLLCWVLVF), 207–227 (GAALANSISYWLNVVLLFCYV), 259–279 (ALMVCLEMWSFELLVLLSGLL), 288–308 (VLSICLNTSGTMWMIPFGLSG), 331–351 (RVVICIAVAESIVIGSVLILI), 365–385 (VVSYVASMMPILALGNFLDSL), 401–421 (IGAIINLGSYYLVGVPSGLLL), and 433–453 (WLGIICALVVQVFGLGLVTIF).

This sequence belongs to the multi antimicrobial extrusion (MATE) (TC 2.A.66.1) family.

The protein resides in the membrane. In Arabidopsis thaliana (Mouse-ear cress), this protein is Protein DETOXIFICATION 16.